We begin with the raw amino-acid sequence, 644 residues long: Threonine--tRNA ligase (644 aa).

A TGS domain is found at 1-62 (MSFSITLPDG…DSDSEVAIIT (62 aa)). The catalytic stretch occupies residues 240–538 (DHRTIGRDLD…LTEIYKGAFP (299 aa)). Residues Cys334, His385, and His515 each coordinate Zn(2+).

It belongs to the class-II aminoacyl-tRNA synthetase family. Homodimer. Zn(2+) is required as a cofactor.

Its subcellular location is the cytoplasm. It carries out the reaction tRNA(Thr) + L-threonine + ATP = L-threonyl-tRNA(Thr) + AMP + diphosphate + H(+). In terms of biological role, catalyzes the attachment of threonine to tRNA(Thr) in a two-step reaction: L-threonine is first activated by ATP to form Thr-AMP and then transferred to the acceptor end of tRNA(Thr). Also edits incorrectly charged L-seryl-tRNA(Thr). In Lactobacillus helveticus (strain DPC 4571), this protein is Threonine--tRNA ligase.